The following is a 573-amino-acid chain: Pentatricopeptide repeat-containing protein At3g62890 (573 aa).

PPR repeat units follow at residues 23–60, 61–95, 96–126, 127–161, 162–188, 198–232, 233–263, 265–295, 301–336, and 337–367; these read ESFLWNIIIRAIVHNVSSPQRHSPISVYLRMRNHRVSP, DFHTFPFLLPSFHNPLHLPLGQRTHAQILLFGLDK, DPFVRTSLLNMYSSCGDLRSAQRVFDDSGSK, DLPAWNSVVNAYAKAGLIDDARKLFDEMPERNVIS, WSCLINGYVMCGKYKEALDLFREMQLP, NEFTMSTVLSACGRLGALEQGKWVHAYIDKYHVEI, DIVLGTALIDMYAKCGSLERAKRVFNALGSK, DVKAYSAMICCLAMYGLTDECFQLFSEMTTS, NSVTFVGILGACVHRGLINEGKSYFKMMIEEFGITP, and SIQHYGCMVDLYGRSGLIKEAESFIASMPME. Positions 372-447 are type E motif; degenerate; the sequence is IWGSLLSGSR…VPGCSYVEVE (76 aa). The type E(+) motif stretch occupies residues 448–478; that stretch reads GVVHEFVVGDESQQESERIYAMLDEIMQRLR. The type DYW motif stretch occupies residues 479–573; that stretch reads EAGYVTDTKE…DGSCSCRDFW (95 aa).

Belongs to the PPR family. PCMP-H subfamily.

In Arabidopsis thaliana (Mouse-ear cress), this protein is Pentatricopeptide repeat-containing protein At3g62890 (PCMP-H82).